We begin with the raw amino-acid sequence, 258 residues long: tRNA pseudouridine synthase A (258 aa).

The active-site Nucleophile is Asp52. Position 110 (Tyr110) interacts with substrate.

Belongs to the tRNA pseudouridine synthase TruA family. Homodimer.

The catalysed reaction is uridine(38/39/40) in tRNA = pseudouridine(38/39/40) in tRNA. In terms of biological role, formation of pseudouridine at positions 38, 39 and 40 in the anticodon stem and loop of transfer RNAs. This Francisella tularensis subsp. novicida (strain U112) protein is tRNA pseudouridine synthase A.